The following is a 214-amino-acid chain: CASP-like protein 0U1 (214 aa).

Over 1–82 the chain is Cytoplasmic; the sequence is MATSEAPLLK…GFTSFYQFKG (82 aa). The chain crosses the membrane as a helical span at residues 83-103; it reads VVGVYAAFWVYTVLLIGLYLF. Residues 104 to 112 are Extracellular-facing; that stretch reads SRGPPPGTE. The chain crosses the membrane as a helical span at residues 113–133; it reads FVVHALFTLCMIAFVSLSVIS. The Cytoplasmic segment spans residues 134–153; it reads CTSTVIESDYSVCKNAAYAK. The chain crosses the membrane as a helical span at residues 154–174; sequence ASLVFAALVVVLNCATCAFVF. Topologically, residues 175–214 are extracellular; it reads KQWRSLQFVGMPENFRPFGRHRHKHGHHAGDADDAIPTHP. The tract at residues 194 to 214 is disordered; that stretch reads RHRHKHGHHAGDADDAIPTHP.

This sequence belongs to the Casparian strip membrane proteins (CASP) family. Homodimer and heterodimers.

The protein localises to the cell membrane. This Ostreococcus tauri protein is CASP-like protein 0U1.